Here is a 1001-residue protein sequence, read N- to C-terminus: 2-oxoglutarate dehydrogenase E1 component (1001 aa).

Belongs to the alpha-ketoglutarate dehydrogenase family. Homodimer. Part of the 2-oxoglutarate dehydrogenase (OGDH) complex composed of E1 (2-oxoglutarate dehydrogenase), E2 (dihydrolipoamide succinyltransferase) and E3 (dihydrolipoamide dehydrogenase); the complex contains multiple copies of the three enzymatic components (E1, E2 and E3). Thiamine diphosphate serves as cofactor.

It catalyses the reaction N(6)-[(R)-lipoyl]-L-lysyl-[protein] + 2-oxoglutarate + H(+) = N(6)-[(R)-S(8)-succinyldihydrolipoyl]-L-lysyl-[protein] + CO2. Functionally, E1 component of the 2-oxoglutarate dehydrogenase (OGDH) complex which catalyzes the decarboxylation of 2-oxoglutarate, the first step in the conversion of 2-oxoglutarate to succinyl-CoA and CO(2). The protein is 2-oxoglutarate dehydrogenase E1 component of Brucella anthropi (strain ATCC 49188 / DSM 6882 / CCUG 24695 / JCM 21032 / LMG 3331 / NBRC 15819 / NCTC 12168 / Alc 37) (Ochrobactrum anthropi).